The following is a 482-amino-acid chain: Exodeoxyribonuclease 7 large subunit (482 aa).

The disordered stretch occupies residues 457–482 (TLDTGGAPAKPASKPKQKPPEQGSLF).

The protein belongs to the XseA family. In terms of assembly, heterooligomer composed of large and small subunits.

The protein localises to the cytoplasm. It catalyses the reaction Exonucleolytic cleavage in either 5'- to 3'- or 3'- to 5'-direction to yield nucleoside 5'-phosphates.. In terms of biological role, bidirectionally degrades single-stranded DNA into large acid-insoluble oligonucleotides, which are then degraded further into small acid-soluble oligonucleotides. The protein is Exodeoxyribonuclease 7 large subunit of Ruegeria pomeroyi (strain ATCC 700808 / DSM 15171 / DSS-3) (Silicibacter pomeroyi).